The sequence spans 361 residues: Beta-hexosaminidase (361 aa).

Substrate contacts are provided by residues D69, R77, R144, and 174 to 175 (KH). The active-site Proton donor/acceptor is H187. D258 (nucleophile) is an active-site residue.

It belongs to the glycosyl hydrolase 3 family. NagZ subfamily.

The protein resides in the cytoplasm. The enzyme catalyses Hydrolysis of terminal non-reducing N-acetyl-D-hexosamine residues in N-acetyl-beta-D-hexosaminides.. It functions in the pathway cell wall biogenesis; peptidoglycan recycling. Plays a role in peptidoglycan recycling by cleaving the terminal beta-1,4-linked N-acetylglucosamine (GlcNAc) from peptide-linked peptidoglycan fragments, giving rise to free GlcNAc, anhydro-N-acetylmuramic acid and anhydro-N-acetylmuramic acid-linked peptides. This Neisseria meningitidis serogroup C (strain 053442) protein is Beta-hexosaminidase.